Here is a 529-residue protein sequence, read N- to C-terminus: Beta-hexosaminidase subunit alpha (529 aa).

A signal peptide spans 1–22; it reads MASSRLWFSLLLAAALAGRATA. A propeptide spanning residues 23 to 88 is cleaved from the precursor; sequence LWPWPQNIQT…PRPYLTGKRH (66 aa). C58 and C104 are joined by a disulfide. N-linked (GlcNAc...) asparagine glycans are attached at residues N115, N157, and N295. The cysteines at positions 277 and 328 are disulfide-linked. The active-site Proton donor is the E323. Residues 423 to 424 are critical for hydrolysis GM2 gangliosides; sequence NR. An intrachain disulfide couples C505 to C522.

Belongs to the glycosyl hydrolase 20 family. There are 3 beta-hexosaminidase isozymes: isozyme A (hexosaminidase A) is a heterodimer composed of one subunit alpha and one subunit beta (chain A and B); isozyme B (hexosaminidase B) is a homodimer of two beta subunits (two chains A and B); isozyme S (hexosaminidase S) is a homodimer of two alpha subunits. The composition of the dimer (isozyme A versus isozyme S) has a significant effect on the substrate specificity of the alpha subunit active site.

It is found in the lysosome. It carries out the reaction Hydrolysis of terminal non-reducing N-acetyl-D-hexosamine residues in N-acetyl-beta-D-hexosaminides.. The enzyme catalyses N-acetyl-beta-D-galactosaminyl-(1-&gt;4)-beta-D-3-sulfogalactosyl-(1-&gt;4)-beta-D-glucosyl-(1&lt;-&gt;1')-ceramide + H2O = a beta-D-3-sulfogalactosyl-(1-&gt;4)-beta-D-glucosyl-(1&lt;-&gt;1')-ceramide + N-acetyl-beta-D-galactosamine. It catalyses the reaction a ganglioside GM2 (d18:1(4E)) + H2O = a ganglioside GM3 (d18:1(4E)) + N-acetyl-beta-D-galactosamine. The catalysed reaction is a ganglioside GM2 + H2O = a ganglioside GM3 + N-acetyl-beta-D-galactosamine. It carries out the reaction beta-D-GalNAc-(1-&gt;4)-alpha-L-IdoA-(1-&gt;3)-beta-D-GalNAc-4-sulfate-(1-&gt;4)-alpha-L-IdoA-(1-&gt;3)-D-GalNAc-4-sulfate + H2O = alpha-L-IdoA-(1-&gt;3)-beta-D-GalNAc-4-sulfate-(1-&gt;4)-alpha-L-IdoA-(1-&gt;3)-D-GalNAc-4-sulfate + N-acetyl-D-galactosamine. The enzyme catalyses N-acetyl-beta-D-6-sulfogalactosaminyl-(1-&gt;4)-alpha-L-iduronyl-(1-&gt;3)-N-acetyl-D-6-sulfogalactosamine + H2O = alpha-L-iduronyl-(1-&gt;3)-N-acetyl-D-6-sulfogalactosamine + N-acetyl-D-6-sulfogalactosamine. Addition of GM2A stimulates the hydrolysis of sulfated glycosphingolipid SM2 and the ganglioside GM2. Functionally, hydrolyzes the non-reducing end N-acetyl-D-hexosamine and/or sulfated N-acetyl-D-hexosamine of glycoconjugates, such as the oligosaccharide moieties from proteins and neutral glycolipids, or from certain mucopolysaccharides. The isozyme S is as active as the isozyme A on the anionic bis-sulfated glycans, the chondroitin-6-sulfate trisaccharide (C6S-3), and the dermatan sulfate pentasaccharide, and the sulfated glycosphingolipid SM2. The isozyme B does not hydrolyze each of these substrates, however hydrolyzes efficiently neutral oligosaccharide. Only the isozyme A is responsible for the degradation of GM2 gangliosides in the presence of GM2A. This is Beta-hexosaminidase subunit alpha from Pongo abelii (Sumatran orangutan).